We begin with the raw amino-acid sequence, 473 residues long: 3-isopropylmalate dehydratase large subunit (473 aa).

The [4Fe-4S] cluster site is built by Cys-348, Cys-413, and Cys-416.

Belongs to the aconitase/IPM isomerase family. LeuC type 1 subfamily. Heterodimer of LeuC and LeuD. The cofactor is [4Fe-4S] cluster.

The enzyme catalyses (2R,3S)-3-isopropylmalate = (2S)-2-isopropylmalate. It participates in amino-acid biosynthesis; L-leucine biosynthesis; L-leucine from 3-methyl-2-oxobutanoate: step 2/4. Its function is as follows. Catalyzes the isomerization between 2-isopropylmalate and 3-isopropylmalate, via the formation of 2-isopropylmaleate. In Parvibaculum lavamentivorans (strain DS-1 / DSM 13023 / NCIMB 13966), this protein is 3-isopropylmalate dehydratase large subunit.